We begin with the raw amino-acid sequence, 211 residues long: Large ribosomal subunit protein eL13 (211 aa).

The protein belongs to the eukaryotic ribosomal protein eL13 family. As to quaternary structure, component of the 60S large ribosomal subunit (LSU).

The protein localises to the cytoplasm. Functionally, component of the ribosome, a large ribonucleoprotein complex responsible for the synthesis of proteins in the cell. The small ribosomal subunit (SSU) binds messenger RNAs (mRNAs) and translates the encoded message by selecting cognate aminoacyl-transfer RNA (tRNA) molecules. The large subunit (LSU) contains the ribosomal catalytic site termed the peptidyl transferase center (PTC), which catalyzes the formation of peptide bonds, thereby polymerizing the amino acids delivered by tRNAs into a polypeptide chain. The nascent polypeptides leave the ribosome through a tunnel in the LSU and interact with protein factors that function in enzymatic processing, targeting, and the membrane insertion of nascent chains at the exit of the ribosomal tunnel. As part of the LSU, it is probably required for its formation and the maturation of rRNAs. This chain is Large ribosomal subunit protein eL13 (rpl13), found in Ictalurus punctatus (Channel catfish).